The sequence spans 61 residues: Metallothionein-1 (61 aa).

The residue at position 1 (M1) is an N-acetylmethionine. Residues 1-29 are beta; that stretch reads MDPNCSCSTGSTCTCSSSCGCKDCKCTSC. 20 residues coordinate a divalent metal cation: C5, C7, C13, C15, C19, C21, C24, C26, C29, C33, C34, C36, C37, C41, C44, C48, C50, C57, C59, and C60. Residues 30-61 form an alpha region; that stretch reads KKSCCSCCPVGCSKCAQGCVCKGASDKCTCCA.

This sequence belongs to the metallothionein superfamily. Type 1 family.

Functionally, metallothioneins have a high content of cysteine residues that bind various heavy metals; these proteins are transcriptionally regulated by both heavy metals and glucocorticoids. The polypeptide is Metallothionein-1 (MT1) (Cricetulus griseus (Chinese hamster)).